The chain runs to 635 residues: 1-deoxy-D-xylulose-5-phosphate synthase (635 aa).

Thiamine diphosphate is bound by residues histidine 76 and 117–119 (GHS). Position 148 (aspartate 148) interacts with Mg(2+). Thiamine diphosphate-binding positions include 149–150 (GA), asparagine 177, tyrosine 294, and glutamate 379. A Mg(2+)-binding site is contributed by asparagine 177.

The protein belongs to the transketolase family. DXPS subfamily. In terms of assembly, homodimer. It depends on Mg(2+) as a cofactor. The cofactor is thiamine diphosphate.

The catalysed reaction is D-glyceraldehyde 3-phosphate + pyruvate + H(+) = 1-deoxy-D-xylulose 5-phosphate + CO2. Its pathway is metabolic intermediate biosynthesis; 1-deoxy-D-xylulose 5-phosphate biosynthesis; 1-deoxy-D-xylulose 5-phosphate from D-glyceraldehyde 3-phosphate and pyruvate: step 1/1. In terms of biological role, catalyzes the acyloin condensation reaction between C atoms 2 and 3 of pyruvate and glyceraldehyde 3-phosphate to yield 1-deoxy-D-xylulose-5-phosphate (DXP). This is 1-deoxy-D-xylulose-5-phosphate synthase from Neisseria meningitidis serogroup C (strain 053442).